A 479-amino-acid chain; its full sequence is MRILFVAAEAAPIAKVGGMGDVVGALPKFLREMGHDVRIFLPYYGFLPDKMEIPKEPIWRGSAMFQEFAVYESVLPGTDVPLYLFGHPVFLPRRIYSGDDEDWRFTFFSNGAAEFAWNYWKPDIIHCHDWHTGMIPVWMHQDPDITTVFTIHNLAYQGPWRWYLEKITWCPWYMQGHNTMAAAVQFANKVNTVSPTYAEQIKTPAYGETLEGLLSFISGKLSGIINGIDTEVYNPEDDKYIAQTFTTETLDKRKANKIALQEEVGLEVNSKAFLIGIVTRLVEQKGIDLILQILDRFLSYTDAQFVLLGTGDRYYETQMWQLASRFPGRMATYLLYNDALSRRIYAGTDAFLMPSRFEPCGISQMMSLRYGSVPIVRRTGGLVDTVSHHDPENAAGTGYCFDRYEPLDLFTCMIRAWEGFRFKPQWQELQKRGMSEDFSWYKSAKEYVKLYRSIYGLPEEEETPKPELVLNEAVTNSKS.

K15 contacts ADP-alpha-D-glucose.

The protein belongs to the glycosyltransferase 1 family. Bacterial/plant glycogen synthase subfamily.

It carries out the reaction [(1-&gt;4)-alpha-D-glucosyl](n) + ADP-alpha-D-glucose = [(1-&gt;4)-alpha-D-glucosyl](n+1) + ADP + H(+). It participates in glycan biosynthesis; glycogen biosynthesis. Synthesizes alpha-1,4-glucan chains using ADP-glucose. The sequence is that of Glycogen synthase from Nostoc punctiforme (strain ATCC 29133 / PCC 73102).